A 74-amino-acid polypeptide reads, in one-letter code: Delta-stichotoxin-Sgt2a (74 aa).

The first 19 residues, 1–19, serve as a signal peptide directing secretion; that stretch reads MNRLIILVFAAVFLTLASA. Positions 20–28 are excised as a propeptide; the sequence is EVSEDVNMA. Disulfide bonds link C34/C71, C36/C64, and C57/C72.

It belongs to the sea anemone sodium channel inhibitory toxin family. Type I subfamily.

The protein localises to the secreted. It localises to the nematocyst. Binds specifically to voltage-gated sodium channels (Nav), thereby delaying their inactivation during signal transduction. The polypeptide is Delta-stichotoxin-Sgt2a (Stichodactyla gigantea (Giant carpet anemone)).